The sequence spans 183 residues: GMP synthase [glutamine-hydrolyzing] subunit A (183 aa).

The 181-residue stretch at 3–183 folds into the Glutamine amidotransferase type-1 domain; the sequence is HILVVDNHGQ…VFENFVAICE (181 aa). The active-site Nucleophile is the cysteine 74. Residues histidine 162 and glutamate 164 contribute to the active site.

In terms of assembly, heterodimer composed of a glutamine amidotransferase subunit (A) and a GMP-binding subunit (B).

The catalysed reaction is XMP + L-glutamine + ATP + H2O = GMP + L-glutamate + AMP + diphosphate + 2 H(+). It functions in the pathway purine metabolism; GMP biosynthesis; GMP from XMP (L-Gln route): step 1/1. Catalyzes the synthesis of GMP from XMP. In Halobacterium salinarum (strain ATCC 700922 / JCM 11081 / NRC-1) (Halobacterium halobium), this protein is GMP synthase [glutamine-hydrolyzing] subunit A.